Reading from the N-terminus, the 217-residue chain is MENSRTPTNKTKITLNRTPTLKERRWNTLKVNTSNVRCSTPIFGNFRSPNLSPIENMGTKGKSPVSPMRFATFKKVPTKVHPKQQQQQQHQHCHRTQLKPPPFVLPKPQEEIIEPEREIKSCSSPDTCSDDSNMETSLALESRRRSIKASNHSYVVNHAANVEQILMHMGLENYVTNFEEAHIDLVELASLERADLVKIGLNTDEDCNRIMDVLHTL.

Positions 39–41 match the POLO box domain (PBD)-binding motif; it reads STP. Residues S63 and S66 each carry the phosphoserine modification. The interval 83 to 106 is disordered; that stretch reads KQQQQQQHQHCHRTQLKPPPFVLP. The region spanning 157–217 is the SAM domain; the sequence is NHAANVEQIL…NRIMDVLHTL (61 aa).

In terms of assembly, interacts with polo. Interacts with cort. Post-translationally, probably ubiquitinated: degraded during the oocyte-to-embryo transition by the anaphase promoting complex/cyclosome (APC/C) containing cort protein.

The protein resides in the nucleus. It localises to the chromosome. In terms of biological role, polo kinase inhibitor required to maintain G2 arrest in the meiotic cell cycle in females. Holds heterochromatically paired homologs together from the end of pachytene until metaphase I. Haploinsufficient locus for homologous achiasmate segregation and may be required for the maintenance of heterochromatic pairings. The chain is Protein matrimony from Drosophila melanogaster (Fruit fly).